Here is a 448-residue protein sequence, read N- to C-terminus: Probable glycine dehydrogenase (decarboxylating) subunit 1 (448 aa).

Belongs to the GcvP family. N-terminal subunit subfamily. As to quaternary structure, the glycine cleavage system is composed of four proteins: P, T, L and H. In this organism, the P 'protein' is a heterodimer of two subunits.

The enzyme catalyses N(6)-[(R)-lipoyl]-L-lysyl-[glycine-cleavage complex H protein] + glycine + H(+) = N(6)-[(R)-S(8)-aminomethyldihydrolipoyl]-L-lysyl-[glycine-cleavage complex H protein] + CO2. In terms of biological role, the glycine cleavage system catalyzes the degradation of glycine. The P protein binds the alpha-amino group of glycine through its pyridoxal phosphate cofactor; CO(2) is released and the remaining methylamine moiety is then transferred to the lipoamide cofactor of the H protein. This is Probable glycine dehydrogenase (decarboxylating) subunit 1 from Listeria innocua serovar 6a (strain ATCC BAA-680 / CLIP 11262).